Reading from the N-terminus, the 66-residue chain is U1-theraphotoxin-Cg1d 2 (66 aa).

The N-terminal stretch at 1–21 (MKMSALFPIFGLPLLFCNSFA) is a signal peptide. Residues 22–29 (AELKATGR) constitute a propeptide that is removed on maturation. Cystine bridges form between Cys-31-Cys-46, Cys-38-Cys-51, and Cys-45-Cys-58. Proline amide is present on Pro-63.

It belongs to the neurotoxin 10 (Hwtx-1) family. 46 (Jztx-7/10/12) subfamily. In terms of tissue distribution, expressed by the venom gland.

The protein resides in the secreted. In terms of biological role, probable ion channel inhibitor. This Chilobrachys guangxiensis (Chinese earth tiger tarantula) protein is U1-theraphotoxin-Cg1d 2.